A 235-amino-acid polypeptide reads, in one-letter code: Pyridoxine 5'-phosphate synthase (235 aa).

Residue asparagine 6 participates in 3-amino-2-oxopropyl phosphate binding. A 1-deoxy-D-xylulose 5-phosphate-binding site is contributed by 8-9 (DH). Arginine 17 contributes to the 3-amino-2-oxopropyl phosphate binding site. Residue histidine 42 is the Proton acceptor of the active site. Positions 44 and 49 each coordinate 1-deoxy-D-xylulose 5-phosphate. The active-site Proton acceptor is the glutamate 69. 1-deoxy-D-xylulose 5-phosphate is bound at residue threonine 99. The Proton donor role is filled by histidine 189. 3-amino-2-oxopropyl phosphate is bound by residues glycine 190 and 211–212 (GH).

The protein belongs to the PNP synthase family. In terms of assembly, homooctamer; tetramer of dimers.

Its subcellular location is the cytoplasm. It carries out the reaction 3-amino-2-oxopropyl phosphate + 1-deoxy-D-xylulose 5-phosphate = pyridoxine 5'-phosphate + phosphate + 2 H2O + H(+). Its pathway is cofactor biosynthesis; pyridoxine 5'-phosphate biosynthesis; pyridoxine 5'-phosphate from D-erythrose 4-phosphate: step 5/5. Its function is as follows. Catalyzes the complicated ring closure reaction between the two acyclic compounds 1-deoxy-D-xylulose-5-phosphate (DXP) and 3-amino-2-oxopropyl phosphate (1-amino-acetone-3-phosphate or AAP) to form pyridoxine 5'-phosphate (PNP) and inorganic phosphate. The sequence is that of Pyridoxine 5'-phosphate synthase from Chlorobium phaeovibrioides (strain DSM 265 / 1930) (Prosthecochloris vibrioformis (strain DSM 265)).